Here is a 427-residue protein sequence, read N- to C-terminus: Enolase (427 aa).

Glutamine 163 lines the (2R)-2-phosphoglycerate pocket. Catalysis depends on glutamate 205, which acts as the Proton donor. Mg(2+) contacts are provided by aspartate 242, glutamate 285, and aspartate 312. 4 residues coordinate (2R)-2-phosphoglycerate: lysine 337, arginine 366, serine 367, and lysine 388. Catalysis depends on lysine 337, which acts as the Proton acceptor.

It belongs to the enolase family. It depends on Mg(2+) as a cofactor.

The protein localises to the cytoplasm. Its subcellular location is the secreted. It is found in the cell surface. It catalyses the reaction (2R)-2-phosphoglycerate = phosphoenolpyruvate + H2O. The protein operates within carbohydrate degradation; glycolysis; pyruvate from D-glyceraldehyde 3-phosphate: step 4/5. In terms of biological role, catalyzes the reversible conversion of 2-phosphoglycerate (2-PG) into phosphoenolpyruvate (PEP). It is essential for the degradation of carbohydrates via glycolysis. This Albidiferax ferrireducens (strain ATCC BAA-621 / DSM 15236 / T118) (Rhodoferax ferrireducens) protein is Enolase.